Here is a 547-residue protein sequence, read N- to C-terminus: bZIP transcription factor 29 (547 aa).

Disordered stretches follow at residues 1 to 199, 244 to 312, and 333 to 356; these read MGDT…SGGE, NSSE…DIAP, and GDESLKPPPSPGSMSRKVSPTNSV. Over residues 15–52 the composition is skewed to polar residues; sequence LHSSFGTTSSSIPKNPISQLDLNPNFIRSSAPQFSKPF. The segment covering 63 to 73 has biased composition (pro residues); that stretch reads PSHPNLIPPTS. The span at 74-89 shows a compositional bias: polar residues; sequence PFSQIPTTRQPGSHNF. The segment covering 120–132 has biased composition (basic and acidic residues); the sequence is FRDHDVSMEDRDS. The segment covering 134 to 157 has biased composition (polar residues); the sequence is VFNSNHSLPPSPFTRCNSTSSSSL. Over residues 249–263 the composition is skewed to basic and acidic residues; sequence DDSKNGNENRDDMES. The span at 264–275 shows a compositional bias: polar residues; sequence SRASGTKTNGSD. Residues 279 to 294 are compositionally biased toward low complexity; the sequence is ESSSVNESANNNMNSS. Polar residues predominate over residues 344-356; the sequence is GSMSRKVSPTNSV. A bZIP domain is found at 394-457; sequence DPKRVKRILA…MGLTNQNNEL (64 aa). The tract at residues 396 to 417 is basic motif; sequence KRVKRILANRQSAARSKERKMR. Residues 416–469 are a coiled coil; that stretch reads MRYIVELEHKVQTLQTEATTLSAQLTLLQRDMMGLTNQNNELKFRLQAMEQQAR. The leucine-zipper stretch occupies residues 422-457; that stretch reads LEHKVQTLQTEATTLSAQLTLLQRDMMGLTNQNNEL. Positions 517–535 are enriched in low complexity; it reads QLRQQPQQMQQQSHQQNHQ. The tract at residues 517-547 is disordered; sequence QLRQQPQQMQQQSHQQNHQNGTMATKSESNE. The span at 536-547 shows a compositional bias: polar residues; sequence NGTMATKSESNE.

As to quaternary structure, forms homodimers. Expressed in roots, leaves and flowers. Expressed in the root tips, lateral root primordia, and guard cells of leaves, hypocotyls and anthers.

It localises to the cytoplasm. The protein localises to the nucleus. Transcription factor that acts as a repressor of reproductive development, meristem size and plant growth. Regulates meristem size, cell size and cell number during plant development. Binds to the promoters of the cell cycle regulators CYCB1-2 and SMR4, and genes involved in cell wall organization, such as XTH9, EXPA1 and EXPA3. Possesses transactivation activity in yeast. Possesses transactivation activity in plant protoplasts. Plays a role in abiotic stress response by binding to the 5'-CAGCTG-3' DNA sequence found in the promoters of MYB44 and TRX8. Plays a role in osmosensory response by binding to the 5'-AGCTGT/G-3' DNA sequence found in the promoters of the hypoosmolarity-responsive genes CYP707A1 and CYP707A3. Binds to the 5'-AGCTGT-3' DNA sequence found in the promoter of the ZAT1 gene in response to abiotic stresses, such as oxidative stress, high-light, osmotic shock, salt and heat stresses. The polypeptide is bZIP transcription factor 29 (Arabidopsis thaliana (Mouse-ear cress)).